The sequence spans 262 residues: Apolipoprotein A-I (262 aa).

A signal peptide spans 1-18; that stretch reads MKAVVLTLAVLFLTGSQA. Repeat copies occupy residues 67-88 and 89-110. The tract at residues 67 to 262 is 10 X approximate tandem repeats; the sequence is LKLLDNWDTL…DEASKKLNAQ (196 aa). M109 bears the Methionine sulfoxide mark. The stretch at 111–121 is one 3; half-length repeat; that stretch reads KDLEEVKQKVQ. 5 consecutive repeat copies span residues 122 to 142, 144 to 165, 166 to 184, 185 to 206, and 207 to 227. One copy of the 9; half-length repeat lies at 228–238; that stretch reads PALEDLRQGLM. Methionine sulfoxide is present on M238. The stretch at 239-262 is repeat 10; the sequence is PVLESLKVSILAAIDEASKKLNAQ.

Belongs to the apolipoprotein A1/A4/E family. Homodimer. Interacts with APOA1BP and CLU. Component of a sperm activating protein complex (SPAP), consisting of APOA1, an immunoglobulin heavy chain, an immunoglobulin light chain and albumin. Interacts with NDRG1. Interacts with SCGB3A2. Interacts with NAXE and YJEFN3. Glycosylated. In terms of processing, palmitoylated. Post-translationally, phosphorylation sites are present in the extracellular medium. As to expression, major protein of plasma HDL, also found in chylomicrons.

The protein resides in the secreted. Functionally, participates in the reverse transport of cholesterol from tissues to the liver for excretion by promoting cholesterol efflux from tissues and by acting as a cofactor for the lecithin cholesterol acyltransferase (LCAT). As part of the SPAP complex, activates spermatozoa motility. The chain is Apolipoprotein A-I (APOA1) from Pantholops hodgsonii (Chiru).